Here is a 299-residue protein sequence, read N- to C-terminus: Sulfotransferase 1B1 (299 aa).

48 to 53 (KSGTTW) is a 3'-phosphoadenylyl sulfate binding site. 107–109 (KTH) contacts substrate. Catalysis depends on His-109, which acts as the Proton acceptor. 3'-phosphoadenylyl sulfate-binding positions include Arg-131, Ser-139, Tyr-194, 228 to 233 (TSFEMM), and 258 to 260 (RKG).

Belongs to the sulfotransferase 1 family. In terms of tissue distribution, liver specific.

The protein localises to the cytoplasm. It carries out the reaction a phenol + 3'-phosphoadenylyl sulfate = an aryl sulfate + adenosine 3',5'-bisphosphate + H(+). The enzyme catalyses 3,3',5-triiodo-L-thyronine + 3'-phosphoadenylyl sulfate = 3,3',5-triiodo-L-thyronine sulfate + adenosine 3',5'-bisphosphate + H(+). The catalysed reaction is 3,3',5'-triiodo-L-thyronine + 3'-phosphoadenylyl sulfate = 3,3',5'-triiodo-L-thyronine sulfate + adenosine 3',5'-bisphosphate + H(+). It catalyses the reaction 3,3'-diiodo-L-thyronine + 3'-phosphoadenylyl sulfate = 3,3'-diiodo-L-thyronine sulfate + adenosine 3',5'-bisphosphate + H(+). It carries out the reaction dopamine + 3'-phosphoadenylyl sulfate = dopamine 3-O-sulfate + adenosine 3',5'-bisphosphate + H(+). The enzyme catalyses dopamine + 3'-phosphoadenylyl sulfate = dopamine 4-O-sulfate + adenosine 3',5'-bisphosphate + H(+). The catalysed reaction is 4-ethylphenol + 3'-phosphoadenylyl sulfate = 4-ethylphenyl sulfate + adenosine 3',5'-bisphosphate + H(+). Its function is as follows. Sulfotransferase that utilizes 3'-phospho-5'-adenylyl sulfate (PAPS) as sulfonate donor to catalyze the sulfate conjugation of dopamine, small phenols such as 1-naphthol and p-nitrophenol and thyroid hormones, including 3,3'-diiodothyronine, triidothyronine (T3) and reverse triiodothyronine (rT3). May play a role in gut microbiota-host metabolic interaction. O-sulfonates 4-ethylphenol (4-EP), a dietary tyrosine-derived metabolite produced by gut bacteria. The product 4-EPS crosses the blood-brain barrier and may negatively regulate oligodendrocyte maturation and myelination, affecting the functional connectivity of different brain regions associated with the limbic system. This chain is Sulfotransferase 1B1, found in Mus musculus (Mouse).